We begin with the raw amino-acid sequence, 139 residues long: MAIKYFLLVNIRGKTRLSQYYESIPFEERPAMESEIIRKCLSRTEIQCSFVEYKDYKVIYRKYATLFFIVGVDTTENELAILELIHNYVEILDSCFDNVIMFNLDKAHFILDEMVSNGDIVEISKQHILEFVNLLYKQE.

This sequence belongs to the adaptor complexes small subunit family. As to quaternary structure, may be part of the adaptor protein complex 4 (AP-4), a heterotetramer composed of two large adaptins (epsilon-type subunitand beta-type subunit), a medium adaptin (mu-type subunit) and a small adaptin (sigma-type).

It localises to the golgi apparatus. The protein localises to the trans-Golgi network membrane. Probable component of an adaptor protein complex. Adaptor protein complexes are vesicle coat components involved both in vesicle formation and cargo selection. They control the vesicular transport of proteins in different trafficking pathways. This Dictyostelium discoideum (Social amoeba) protein is AP-4 complex subunit sigma.